The following is a 59-amino-acid chain: Large ribosomal subunit protein bL32 (59 aa).

The tract at residues 1–59 (MAVQQNRKSRSRRGMRRSHDALSSAALSIDPTTGEKHRRHHVTPDGFYRGKKVVEVSQD) is disordered. The segment covering 7 to 16 (RKSRSRRGMR) has biased composition (basic residues).

This sequence belongs to the bacterial ribosomal protein bL32 family.

This chain is Large ribosomal subunit protein bL32, found in Hahella chejuensis (strain KCTC 2396).